The primary structure comprises 150 residues: UPF0756 membrane protein STH2648 (150 aa).

A run of 4 helical transmembrane segments spans residues 13-33 (ALGV…VLIL), 52-72 (AGLI…EVGW), 85-105 (LAAI…VTLL), and 111-131 (VIVG…GIPV).

It belongs to the UPF0756 family.

It is found in the cell membrane. The chain is UPF0756 membrane protein STH2648 from Symbiobacterium thermophilum (strain DSM 24528 / JCM 14929 / IAM 14863 / T).